Here is a 336-residue protein sequence, read N- to C-terminus: Minor tail protein Gp27 (336 aa).

This Mycobacterium phage L5 (Mycobacteriophage L5) protein is Minor tail protein Gp27 (27).